Consider the following 1403-residue polypeptide: DNA-directed RNA polymerase subunit beta' (1403 aa).

Cys-68, Cys-70, Cys-83, and Cys-86 together coordinate Zn(2+). 3 residues coordinate Mg(2+): Asp-459, Asp-461, and Asp-463. Cys-814, Cys-887, Cys-894, and Cys-897 together coordinate Zn(2+).

It belongs to the RNA polymerase beta' chain family. As to quaternary structure, the RNAP catalytic core consists of 2 alpha, 1 beta, 1 beta' and 1 omega subunit. When a sigma factor is associated with the core the holoenzyme is formed, which can initiate transcription. Mg(2+) serves as cofactor. Zn(2+) is required as a cofactor.

The catalysed reaction is RNA(n) + a ribonucleoside 5'-triphosphate = RNA(n+1) + diphosphate. Functionally, DNA-dependent RNA polymerase catalyzes the transcription of DNA into RNA using the four ribonucleoside triphosphates as substrates. The protein is DNA-directed RNA polymerase subunit beta' of Solibacter usitatus (strain Ellin6076).